Here is a 122-residue protein sequence, read N- to C-terminus: Secreted RxLR effector protein RXLR-C251 (122 aa).

The first 24 residues, 1-24 (MRFFYKLALMTTVASLACSDTALA), serve as a signal peptide directing secretion. The RxLR signature appears at 48–51 (RSLR).

The protein belongs to the RxLR effector family.

The protein localises to the secreted. Its subcellular location is the host cytoplasm. It is found in the host nucleus. Secreted effector that does not suppress pattern-triggered immunity (PTI) in plant host. The protein is Secreted RxLR effector protein RXLR-C251 of Plasmopara halstedii (Downy mildew of sunflower).